The sequence spans 142 residues: Probable inactive dual specificity protein phosphatase-like At4g18593 (142 aa).

The protein belongs to the protein-tyrosine phosphatase family. Non-receptor class dual specificity subfamily.

The protein is Probable inactive dual specificity protein phosphatase-like At4g18593 of Arabidopsis thaliana (Mouse-ear cress).